The chain runs to 467 residues: GTPase Der (467 aa).

EngA-type G domains lie at Pro25–Pro188 and Arg199–Glu372. Residues Gly31–Ser38, Asp78–Trp82, Asn140–Asp143, Gly205–Ser212, Asp252–Leu256, and Asn317–Asp320 each bind GTP. One can recognise a KH-like domain in the interval Thr373–Lys455.

Belongs to the TRAFAC class TrmE-Era-EngA-EngB-Septin-like GTPase superfamily. EngA (Der) GTPase family. In terms of assembly, associates with the 50S ribosomal subunit.

Its function is as follows. GTPase that plays an essential role in the late steps of ribosome biogenesis. The protein is GTPase Der of Salinispora arenicola (strain CNS-205).